A 541-amino-acid polypeptide reads, in one-letter code: Anthranilate synthase component 1 (541 aa).

Residues Ser-61 and 311–313 each bind L-tryptophan; that span reads PYM. Residue 348 to 349 coordinates chorismate; sequence GT. Position 381 (Glu-381) interacts with Mg(2+). Residues Tyr-469, Arg-489, 503 to 505, and Gly-505 contribute to the chorismate site; that span reads GAG. Mg(2+) is bound at residue Glu-518.

This sequence belongs to the anthranilate synthase component I family. Heterotetramer consisting of two non-identical subunits: a beta subunit (TrpG) and a large alpha subunit (TrpE). Mg(2+) serves as cofactor.

The catalysed reaction is chorismate + L-glutamine = anthranilate + pyruvate + L-glutamate + H(+). It participates in amino-acid biosynthesis; L-tryptophan biosynthesis; L-tryptophan from chorismate: step 1/5. Its activity is regulated as follows. Feedback inhibited by tryptophan. In terms of biological role, part of a heterotetrameric complex that catalyzes the two-step biosynthesis of anthranilate, an intermediate in the biosynthesis of L-tryptophan. In the first step, the glutamine-binding beta subunit (TrpG) of anthranilate synthase (AS) provides the glutamine amidotransferase activity which generates ammonia as a substrate that, along with chorismate, is used in the second step, catalyzed by the large alpha subunit of AS (TrpE) to produce anthranilate. In the absence of TrpG, TrpE can synthesize anthranilate directly from chorismate and high concentrations of ammonia. The protein is Anthranilate synthase component 1 (trpE) of Vibrio parahaemolyticus serotype O3:K6 (strain RIMD 2210633).